Here is a 358-residue protein sequence, read N- to C-terminus: Alpha-ketoglutarate-dependent L-arginine hydroxylase (358 aa).

The interval 1–21 (MTESPTTHHGAAPPDSVATPV) is disordered. A helical membrane pass occupies residues 117–135 (LSFLLMLYAGLLGDVFGWA). Residue 156–158 (LVS) participates in L-arginine binding. Positions 168 and 170 each coordinate Fe cation. A 2-oxoglutarate-binding site is contributed by T194. Residue 268-270 (DGD) participates in L-arginine binding. Residue H316 coordinates Fe cation. 2 residues coordinate 2-oxoglutarate: R330 and R334. R334 serves as a coordination point for L-arginine.

Belongs to the clavaminate synthase family. Requires Fe cation as cofactor.

The protein resides in the membrane. It catalyses the reaction L-arginine + 2-oxoglutarate + O2 = (2S,3S)-hydroxyarginine + succinate + CO2. It participates in antibiotic biosynthesis. Functionally, involved in the biosynthesis of capreomycidine, an unusual amino acid used by non-ribosomal peptide synthases (NRPS) to make the tuberactinomycin class of peptide antibiotics such as viomycin and capreomycin. Catalyzes the stereospecific hydroxylation of the C3 of (2S)-arginine to generate (3S)-hydroxy-(2S)-arginine. Usually clavaminic acid synthase-like oxygenases catalyze the formation of threo diastereomers, however VioC produces the erythro diastereomer of beta-carbon-hydroxylated L-arginine. It exerts a broad substrate specificity by accepting the analogs L-homoarginine and L-canavanine for the beta-carbon hydroxylation. The polypeptide is Alpha-ketoglutarate-dependent L-arginine hydroxylase (vioC) (Streptomyces vinaceus).